Here is a 306-residue protein sequence, read N- to C-terminus: Putative dihydroorotate dehydrogenase A (fumarate) (306 aa).

FMN contacts are provided by residues Ser-20 and 44-45 (KG). Substrate is bound by residues Lys-44 and 68-72 (NSIGL). Residues Asn-98 and Asn-126 each contribute to the FMN site. Residue Asn-126 participates in substrate binding. Cys-129 (nucleophile) is an active-site residue. Residues Lys-164 and Ile-190 each contribute to the FMN site. 191 to 192 (NT) is a substrate binding site. FMN is bound by residues Gly-216, 244–245 (GG), and 266–267 (GT).

This sequence belongs to the dihydroorotate dehydrogenase family. Type 1 subfamily. In terms of assembly, homodimer. Requires FMN as cofactor.

It is found in the cytoplasm. It carries out the reaction (S)-dihydroorotate + fumarate = orotate + succinate. The protein operates within pyrimidine metabolism; UMP biosynthesis via de novo pathway. Catalyzes the conversion of dihydroorotate to orotate with fumarate as the electron acceptor. This chain is Putative dihydroorotate dehydrogenase A (fumarate) (pyrD), found in Aquifex aeolicus (strain VF5).